The chain runs to 189 residues: Crossover junction endodeoxyribonuclease RuvC (189 aa).

Residues Asp-7, Glu-68, and Asp-141 contribute to the active site. Mg(2+) contacts are provided by Asp-7, Glu-68, and Asp-141.

Belongs to the RuvC family. Homodimer which binds Holliday junction (HJ) DNA. The HJ becomes 2-fold symmetrical on binding to RuvC with unstacked arms; it has a different conformation from HJ DNA in complex with RuvA. In the full resolvosome a probable DNA-RuvA(4)-RuvB(12)-RuvC(2) complex forms which resolves the HJ. It depends on Mg(2+) as a cofactor.

Its subcellular location is the cytoplasm. The catalysed reaction is Endonucleolytic cleavage at a junction such as a reciprocal single-stranded crossover between two homologous DNA duplexes (Holliday junction).. The RuvA-RuvB-RuvC complex processes Holliday junction (HJ) DNA during genetic recombination and DNA repair. Endonuclease that resolves HJ intermediates. Cleaves cruciform DNA by making single-stranded nicks across the HJ at symmetrical positions within the homologous arms, yielding a 5'-phosphate and a 3'-hydroxyl group; requires a central core of homology in the junction. The consensus cleavage sequence is 5'-(A/T)TT(C/G)-3'. Cleavage occurs on the 3'-side of the TT dinucleotide at the point of strand exchange. HJ branch migration catalyzed by RuvA-RuvB allows RuvC to scan DNA until it finds its consensus sequence, where it cleaves and resolves the cruciform DNA. This Rhodococcus opacus (strain B4) protein is Crossover junction endodeoxyribonuclease RuvC.